Reading from the N-terminus, the 160-residue chain is UPF0178 protein BB1267 (160 aa).

This sequence belongs to the UPF0178 family.

In Bordetella bronchiseptica (strain ATCC BAA-588 / NCTC 13252 / RB50) (Alcaligenes bronchisepticus), this protein is UPF0178 protein BB1267.